The following is a 153-amino-acid chain: Endoribonuclease YbeY (153 aa).

3 residues coordinate Zn(2+): His113, His117, and His123.

This sequence belongs to the endoribonuclease YbeY family. Zn(2+) serves as cofactor.

It is found in the cytoplasm. Functionally, single strand-specific metallo-endoribonuclease involved in late-stage 70S ribosome quality control and in maturation of the 3' terminus of the 16S rRNA. This Aliivibrio fischeri (strain ATCC 700601 / ES114) (Vibrio fischeri) protein is Endoribonuclease YbeY.